A 6077-amino-acid chain; its full sequence is MAQQAQCLLPSFGTISDGPKRPVSITTKTTPSQSAKLLSAYKNDSLDPLLKTAWGLLLYRYTGLQDVCFGYKHDDAGALVSQTSDAGRLLTFRLTINEHDTIKTILEKSGGGYGCQTDIGVSGSSNANNDNYSSFNTVVMVRVCGDSTKEETFVRPVFQSILPEECRARLHVKVLQEDICIFLEWWNTDISTAQMESVARYFEHILNQVLYSDDTVVANADCFLEQDWARICKFNSVIPETYDRCIHDVISEQVRLHPQREAVCAWDGSFTYGELDVLASELSYRLKGYGVRPETFVALCFDKSKWNIVAMLGVLKAGGAFVPLDPTHPTPRLRSLVDSVNVNIMLCSRNRAEHLSKVVNNLIPLDEQSFGKISFPPRGYLRQEVKSNNAAYLIFTSGSTGKPKGTLLEHRAFVSCVFAYAPLIHGGCVCVPSEEERLNDIVQAINRMNVNFICLTPSFARFVNPSSIPQVNTALLVGEAMSRTDLEAWSHIKLLNGYGPTEAAVCAAINSTMDINSDCRDIGLATGTHFWVVKPNNHDQLVPVGCPGELLLEGPTLARCYINNPEKTDEVFIYNPTWARHDPKRGDRRFYKTGDLVRYNSDLGSLTFLGRKDSQIKLHGQRIELGEIEHNISTLPLVKHGMAFLCESGPAKGRLMAVVSLNGELSSNTVPFKLLPPAERTYAVTELRQQLSKRLPTYMIPAVWLCVEALPLLPSGKLNRREIISWATNKTDDFQGGASESSGVETPKAAHSEVTVEDRLKSIWSRVLAIPRDRISLDESFLALGGDSIAAITCMGYCKKQGMGVTVQDVLQSKSIRDLVTRVQEIKHLVKYQEETEEPFGLSPIQKLHFMIRKEGQGYFNQSVRTRLSRRLSADDLRHAIQVIIERHSMLRVRLIKDTLVGNLRQRITRDIDSSYRLRVHNINHQAQMESAISVSQSCINAFQGPIMAVDIFYTEDDCFLSMVAHHLAIDIVSWRIILEDLEDILLRSEDKTIYTSSLPFSTWCHLQDERTQTFGSYLEDLPIPDAAYWGVENRVATYGDAICETFELGLDDSKSILMECHKSLATEPVDILLASLLHAFGQTFRDRSLPAIYNEGHGREAWDSSIDISRTVGWFTTVFPIFIREQIPDDPVETVVLVKDIRRSVSDNGRQRFASLMSASTKDEKREFLCPMEISFNYVGQHRDLQRQDGLFQLMNQMAGETGQGGGASDFGKETPRFGLFEISALAVNGRLRFIFSFSKYMRHQKRIRAWIASCGDVLRSLGKRLQTHAKRPTLSDFPMLSLTYPDIESMLAKTLPSLGVSSPELIEDIYPCSRMQQGILLARSRDSSLYAVHDTYEVRGFNGKPDVARLAEAWRMVVSRHAMLRTLFVENLTSRDLFSQLVLRNCEPSILYLSCPTDDDVVSTFNSQRPEIYNEYQPHHRLTFCETASGRVFFRLELSHAAMDGVSISVILRDLQLAYDGKLDQNKPLFKNYIQYLRNTPQDASIVYWKNYLADVKPCLFPTLTDGKIIAQKQLKVLRPKFNLFNDLQTACEERRLTLSSAFTAAWGLTLSLFCGSNDVCFSYMTSLRDALVDDIESVVGPVINLLACRVKISEGDTLRDIMQKVQNDCMEQLAYNTLSLIDIVHELRLSEQALINTGISYQRVTKMQMHHTTGINLSRVCAIQDPAEYPLFVNVVASDKAAEIEVNYWTDTLSDEQAESVSSTFFKCLENIVRHLKEQVGQLEVLSDWNKQRIRKWNKQLPEEVDMLVQDIIQEKMASQPDKPAIIAWDGTLTYAELEYLSSCFAAYLQQLGVRRGTLMPIYVGKSVWQIVAILAVFKTGAICVPRDEAQLGDSVDKWLVDHGAHIVVTLPSLAGSLERQFPVVVPINKSLFEFLPSSSQENLPQVYPHDDSFIAFDSSDPHESSAVLDQRAIIARAASFASTINSNSGTKTFQYAPCTSDMFLQEVMGTFMSGGCLCIPRSDSLSQLSRSINETSANLICLTPLVASFIRPSDVPSIQVLVLFGEQSARNVRNIWSEKVQLYTFYGRTECSSTCIQVSGLDDLDTQSSIGTSVGCCSWVVDPQDFTRLVPVGCIGELVIEGPSVSRGYFCHEKQKKERFTEQDRGLMEPAKRPYTLFPGSRRKMFRTGYLVRYNADGTLVYLGEKVDSMDQTLQMIAFKIEQLLDVQGSAGYRCVAEILDLRIEEYPEPCIAVFILSTEKQQSNTIKQSTVIARKTNNSHMLMAKLHASLAASLPASQVPSLYFPVFGLPMTSLGKVNRPLLRKAVKSLSADSLTEYDLKKFGEFWRHQLEKPSLSGQHLLQPFPIQESPALKMVDKGELLVNAKESSNSAEQFLPQATMIPRRVQVNNSTSISGLLDQTASCLVKARPYEKTPLSSIRSLNADTSQASDFDSALSISSMTSQQQSQYLRSLENAERLHSRFSACPIVVFCALEETGVSLEIRYDDRAVYRSQADRLLALFGECLNIFKSTTGLEEKVADLSKRGGNLQIFNDTIDYWKVQLTDIESCLFPDLSPKKGESRLGTETLRLSNASKMQSACKALSINPNILLQTVWALVLRCYTGLEDVCFGYHVSTKKDSVNILPCRFNLNDDLRLQDVMQKRKEDMESASKYQMPLFEILRAIGSENSPIFNTAFRYRKSSSNAAVFNNAVLDPVNEGLNEYLISVNASVSGSSAEISFDYQSTSLSETDIGHIIDCFECILNSILTLLGPSRVIRDVEFFGRQSCQKVSAWNASLPERPKRCAHTIIQDRVIAQPSAPAICSWDENFTYSELDSLTTKLAYHLMDWGVGPEVFVGLCFEKSAWAVIAQVAVLKAGGAFASLDPAHPESRLRGLVDDIAAPIVLCSTRYLDKSSRICMAALAVSHYTLEQIPDSPATRSLPTLSVENAAYAIFTSGTTGKPKITVLEHAALDVASSCFAKTLGIDSNTRALQFSSYTFDVSILETIITLMTGGCVCTPSDDERMNDLAGAIKRMEANSISCTPSVISTLDPSSVPTLKTIFTGGEKLTEAQIMRWADRRFYNAYGPSEATIIATASLKVNRDGIRLDDDCNSIGTAVCGRAWIVDPYNHHRLLPVGAVGELVLEGYNIARGYLNNDKKTKEVFITLPRWLRDSGLRDVPKPTGRMYRTGDLVRYKSDKNISFISRMDTQVKLNGQRIELEEIEQQCTFISPANTQVAVDIVVPETKTVAKALAAFITIAGHEAQSATPGLGVSSSLLLPLSDSIQRTIGQLHNSLGQVLPQVMIPRLYFPVRYLPLGTTGKLDRKGLRAMVQALPKEQLISYMISNVGSGRAVERAAESTLRDLWAKALEIEPGSISAEDSFFALGGDSFAAMKLVGAARSQNISLSFATIYEHPVLVDMAKCCDDTEKPAERQRADLRPFTLVPGSIPLHDIMEEVSEQCSVTKDSIADIYPCTAVQEGLITLSIKSPGSYVARIPYRLAASIDLQRFKAAWQQVTDEFDILRTRIVHIENTGFLQVVLKKERISWTLETSLDNVTDDTAEGSGALLAKYAIVQLGTDSRYRQCLYKLFIHHLLQRDMQQSDEFWKSYLDGLSCEPFPPKKNKDLSCSGAGSIHRASVDISRKVGTTDTTVPELVRSAWAIVLSVHTGSGDVCFGETLMGRNIDMPGITDVVGPVLTTVPMRIRVDNKLPINQYLRDVRQIITTMIPHQHSGLQRIQKLSGDAALACNFQNLLVIQSDDSQLNDDIWSPVEQDTRGDFFTHPLVVQCQISGPRLLILANYDELVLDDWQTERLIGQFSFVLEQLLSVPRDSLMTVGDIDITGPLDKRDIASWNQRQVTCVNKCVHEIIRENAIMHPQATAICSWDGEITYEEMFQLASSFAAYLVICGVGPETLVPVCLGKSLWTMVTVLSVLLAGGAFVPLDPSHPTSRHKEILEEIEADMILCSPQLRSRYLGSVSTIIPVSEDTIKAYSTVTTSEKANASPTPENMAYAIFTSGSTGRPKGIIIEHRAVCSSVIGFAPVVGLNKESRVFQFASLTFDAAILEVLGTLMLGGCICVPSDDERLNDIPGAMQRMNVSWSFLTPSVACILEPSTVPSLQILTCGGEALSSEVVKKWTGHVKFYGGYGPTETVVFAVVARDFVDHDFTCIGYGVPSTLTWVVQPDDHDRLAPLGAVGELVLEGPALAREYLKNPSKTTDVFINEPAWIKSFPSSLPSPRRIYKTGDLVRYNPDGSIEYLGRKDHQVKLHGQRMELGEIEHRLLASENIRNAVVILPQKGPLRQKLVAVLSLKSLTVESSTIMTGSCELASQKDMLETGYRQIRTSQKSIEEQLPVYMVPQAWAVVKSIPMLVSGKLDRKRICTWLEQIDKSAYDRIMQDYDNVDQVIVEEENKGEREGDATPAIIRDIFAQVLNLPLNKVDPSRSFIYLGGDSISGMAVVSKARKRGLNLPLNRILQAKSIEELAVSCGTKPLPTKNVKESGSLFPLSPIQELFFRSASVLPKALGRFNQSITVRLARRTEPNVLEDAVRAVVQKHAMFRARFSKSSDGTWRQRITDEVDSSYKFCTHPVKNAGNMLSIIADTQSSLDIQRGPVIAADLFDKNGEQILFLVASHICVDVVSWRIVLQELEDFVDTGSIPSDVPLSFKSWCNVQFEESKRLNKSIEIPCQQADLNYWGMSRAPNNYGHVKMDSFALDKQATAFISGHFHEILGTETMEVLLAAVMYSFNRVFPDRDAPTIYNEGHGREPWNYSDPSGTIGWFTTLNPLHVEASSDLLELLKQVKDTRRRISEHSRAFFAHNVLHSDSTDRTHMFSIPLEILFNYLGQLQQLERGGSTFQHYGDVFSAETMDSASDMGPETPRFSLFEITALILKEQLHISFTYNRNMRHQARIQAWMAECKRVLEVELPKFRNVAPQPTLSDYPLLPITYHGLEELTASVLPRLGLESWRQVEDIYPCSPVQEGILFSQLRDPHEYIFNAIFELRQSGNKGSFDLARLKKAWSTVVVRHPVLRTVFIDSCCEEGSFDQVVLKEASDATVLIECDDLDALNKLEAVSLRSNKSLNLYHQLVLCKTSTGRVLMKLEMNHVIIDGGSTSILLRELALAYSNQHPPGPGPLFSEYIKYLREQPTAEALEYWKRRLSDMPPCHLPINASENGARQLGTHLVAFNRFAALQSFCEANSITFANLILAVWAIVLRSHTKSDDVCFGYPSTGRDLPVPGIQDAVGIFINTLCCRVRFDTNQTLKGTVKSVQEDHIASLAYQRSSLAEIQHALGRKGEPLFNTCISIQNRSEDKTEIAGISYEFQKAHDPCEMLGKGKPVTSWVKSHGAESPSDFPDIRNDVEESLQDLVVMMEKTPASSTQTLNTDYRAPNDSEKQLWRLWSITLGLPPHPVKYHDSFFRLGGDSITAMRLVRAARDEGLKLSVADVLKNPVFENMMALINDRKKSIPTTVTEKRADSIEKRVEDKPILTKCESSQDISILRPMSLEFDDTSLRAAISPKVGVFKGGIVDVLPVTDFQALSLTATMFESRWMLNYFYLDGKGSLDIRRLRESFLRVVDAFDILRTVFVCFHGQFYQVVLRKIKPDIFVHETEKGLDEYTNSLQQRDREQSPGQGQQCVQFYVVRKTNSDEHRILVRMSHAQFDGVCLSKIMTAIKMAYEGSPVSPSSFLNYMRLLPGNITPEHYQHWGNLLKGSKMTQIVQRDRPNTFQHIGGFTQQSKVIEIPSTATENVTIATVMQSAWAVTLAKICAQDDVVFGLTVNGRNAVPGAENTIGPCLNFIPIRVTFKDCWTGLDLFRFLQDQQVANMTYESLGFREIVRRCTDWPESTFFTTSVLHQNVDYEGHMQLDNNTYKMGGVGVIDNLTDLTLFSKPVAGQPAQINVALGYSTKGPIHPSFVSTVLDMVCDTAQSLVANPNVALPSPSTIRSLPPQLVEDIPTTGSTDSLLSSLNNHSLSEILVHSDLITRIWQQVLPPKLNTGKPPSSYQLDSSFFGLGGDIVNVAQVVWILEQETGLHIRLEDLLAHSTFLGHMAVLALNMTKRDSAGVDSDAAPAPAYAPVDARASRNVSTSRQQQEGLPLPAANAKSEWSALDRARVLAKKITRLGGLGTRV.

Positions 417 to 618 (VFAYAPLIHG…LGRKDSQIKL (202 aa)) are adenylation 1. The Carrier 1 domain maps to 751-827 (HSEVTVEDRL…DLVTRVQEIK (77 aa)). The residue at position 788 (S788) is an O-(pantetheine 4'-phosphoryl)serine. Condensation stretches follow at residues 842–1267 (LSPI…GKRL) and 1309–1737 (EDIY…KQRI). 2 adenylation regions span residues 1757–2149 (QEKM…YLGE) and 2755–3157 (DRVI…QVKL). The 77-residue stretch at 3297–3373 (AVERAAESTL…DMAKCCDDTE (77 aa)) folds into the Carrier 2 domain. The residue at position 3334 (S3334) is an O-(pantetheine 4'-phosphoryl)serine. A condensation 3 region spans residues 3524-3779 (DSRYRQCLYK…LLSVPRDSLM (256 aa)). The tract at residues 3816–4213 (ENAIMHPQAT…LGRKDHQVKL (398 aa)) is adenylation 4. One can recognise a Carrier 3 domain in the interval 4361 to 4437 (REGDATPAII…ELAVSCGTKP (77 aa)). O-(pantetheine 4'-phosphoryl)serine is present on S4398. Condensation regions lie at residues 4451 to 4869 (PLSP…RVLE) and 4916 to 5260 (VEDI…EDKT). Residues 5334 to 5410 (RAPNDSEKQL…NMMALINDRK (77 aa)) form the Carrier 4 domain. S5371 bears the O-(pantetheine 4'-phosphoryl)serine mark. The tract at residues 5476-5885 (DVLPVTDFQA…SLVANPNVAL (410 aa)) is condensation 6. Residues 5921-6004 (SEILVHSDLI…GHMAVLALNM (84 aa)) enclose the Carrier 5 domain. Residues 6013–6027 (DSDAAPAPAYAPVDA) show a composition bias toward low complexity. The segment at 6013-6047 (DSDAAPAPAYAPVDARASRNVSTSRQQQEGLPLPA) is disordered. Polar residues predominate over residues 6031–6041 (RNVSTSRQQQE).

The protein belongs to the NRP synthetase family.

Its pathway is secondary metabolite biosynthesis. In terms of biological role, nonribosomal peptide synthetase involved in the synthesis of nidulanin A and derived compounds. Nidulanin A is a tetracyclopeptide with the sequence L-Phe-L-Kyn-L-Val-D-Val and an isoprene unit N-linked to the amino group of L-kynurenine. The NRPS nlsA is responsible of the synthesis of the cyclopeptide and the prenyltransferase nptA adds the isoprene unit on the L-kynurenine residue of nidulanin A. Further modifications lead to additional oxygenated related compounds. In Emericella nidulans (strain FGSC A4 / ATCC 38163 / CBS 112.46 / NRRL 194 / M139) (Aspergillus nidulans), this protein is Nonribosomal peptide synthetase nlsA.